The chain runs to 62 residues: Photosystem II reaction center protein Z (62 aa).

2 consecutive transmembrane segments (helical) span residues 8-28 (LIAA…VVFS) and 41-61 (WGGA…SIVV).

Belongs to the PsbZ family. As to quaternary structure, PSII is composed of 1 copy each of membrane proteins PsbA, PsbB, PsbC, PsbD, PsbE, PsbF, PsbH, PsbI, PsbJ, PsbK, PsbL, PsbM, PsbT, PsbX, PsbY, PsbZ, Psb30/Ycf12, peripheral proteins PsbO, CyanoQ (PsbQ), PsbU, PsbV and a large number of cofactors. It forms dimeric complexes.

The protein resides in the cellular thylakoid membrane. May control the interaction of photosystem II (PSII) cores with the light-harvesting antenna, regulates electron flow through the 2 photosystem reaction centers. PSII is a light-driven water plastoquinone oxidoreductase, using light energy to abstract electrons from H(2)O, generating a proton gradient subsequently used for ATP formation. The chain is Photosystem II reaction center protein Z from Acaryochloris marina (strain MBIC 11017).